A 71-amino-acid polypeptide reads, in one-letter code: Ubiquinol-cytochrome c reductase complex assembly factor 6 (71 aa).

Topologically, residues methionine 1–serine 8 are mitochondrial matrix. The chain crosses the membrane as a helical; Signal-anchor for type II membrane protein span at residues threonine 9–alanine 25. Residues glutamate 26–lysine 71 are Mitochondrial intermembrane-facing.

Belongs to the UQCC6 family. Interacts with UQCRC1. Interacts with UQCRQ. Interacts with UQCC5. Forms a complex, named COMB/coordinator of mitochondrial CYTB biogenesis, composed of UQCC1, UQCC2, UQCC4, UQCC5 and UQCC6; stabilizes nascent cytochrome b/MT-CYB and promotes its membrane insertion. Forms a complex, named COMA, composed of UQCC1, UQCC2 and UQCC4; activates MT-CYB translation. Forms a complex, named COMC, composed of UQCC1, UQCC2; UQCC3 and UQCC4; mediates MT-CYB hemylation and association with the first nuclear-encoded complex III subunit UQCRQ. Interacts with MT-CYB. Cardiac and skeletal muscle (at protein level).

The protein localises to the mitochondrion inner membrane. In terms of biological role, required for the assembly and stability of the mitochondrial ubiquinol-cytochrome c reductase complex (complex III (CIII) or cytochrome b-c1 complex), a multisubunit transmembrane complex that is part of the mitochondrial electron transport chain (ETC) which drives oxidative phosphorylation. Mediates early complex III biogenesis. Participates in regulating the levels of electron transport chain proteins, and therefore energy supply, in response to changes in energy demand. Also required for cytochrome c oxidase complex (complex IV) assembly. In Homo sapiens (Human), this protein is Ubiquinol-cytochrome c reductase complex assembly factor 6.